An 808-amino-acid chain; its full sequence is Probable E3 ubiquitin-protein ligase hulA (808 aa).

The 112-residue stretch at 1–112 (MGSNLPAQPN…QMGGDEMLTR (112 aa)) folds into the C2 domain. Disordered regions lie at residues 134 to 231 (NLST…GWER) and 275 to 346 (RRAH…YFVD). 2 stretches are compositionally biased toward polar residues: residues 142–159 (QANGLHRSNLQSSTSSGL) and 171–198 (GPSQLDPTASNPSLNPQRVPSTTRPSST). Low complexity predominate over residues 199-210 (VAPVNGAAAPGA). A compositionally biased stretch (polar residues) spans 211–220 (SRTNLSSFED). Positions 223–256 (GRLPAGWERREDNLGRTYYVDHNTRTTTWTRPSS) constitute a WW 1 domain. A compositionally biased stretch (basic and acidic residues) spans 275–288 (RRAHQSRMLPEDRT). Polar residues predominate over residues 289 to 303 (GASSPNLQENQQAQT). Residues 317–326 (ATGATTAGTG) are compositionally biased toward low complexity. WW domains are found at residues 326 to 359 (GELPPGWEQRTTPEGRPYFVDHNTRTTTWVDPRR) and 386 to 419 (GPLPSGWEMRLTNTARVYFVDHNTKTTTWDDPRL). The HECT domain occupies 475–808 (SASDLKKRLM…VEETLGFGQE (334 aa)). Cysteine 776 serves as the catalytic Glycyl thioester intermediate.

The protein belongs to the RSP5/NEDD4 family. Interacts with creD.

The protein localises to the cytoplasm. The enzyme catalyses S-ubiquitinyl-[E2 ubiquitin-conjugating enzyme]-L-cysteine + [acceptor protein]-L-lysine = [E2 ubiquitin-conjugating enzyme]-L-cysteine + N(6)-ubiquitinyl-[acceptor protein]-L-lysine.. Its pathway is protein modification; protein ubiquitination. Functionally, E3 ubiquitin-protein ligase which accepts ubiquitin from an E2 ubiquitin-conjugating enzyme in the form of a thioester and then directly transfers the ubiquitin to targeted substrates. Probably involved in the regulatory network controlling carbon source utilization. The chain is Probable E3 ubiquitin-protein ligase hulA (hulA) from Aspergillus terreus (strain NIH 2624 / FGSC A1156).